Reading from the N-terminus, the 468-residue chain is Hydroxymethylglutaryl-CoA lyase, mitochondrial (468 aa).

A Pyruvate carboxyltransferase domain is found at 168 to 435 (VKIVEVGPRD…HTNVDLGKLI (268 aa)). Residue R176 participates in substrate binding. The a divalent metal cation site is built by D177, H368, and H370. C401 is a catalytic residue. N410 contacts a divalent metal cation.

Belongs to the HMG-CoA lyase family. In terms of assembly, homodimer. Requires a divalent metal cation as cofactor.

It localises to the mitochondrion matrix. The catalysed reaction is (3S)-3-hydroxy-3-methylglutaryl-CoA = acetoacetate + acetyl-CoA. It participates in metabolic intermediate metabolism; (S)-3-hydroxy-3-methylglutaryl-CoA degradation; acetoacetate from (S)-3-hydroxy-3-methylglutaryl-CoA: step 1/1. In terms of biological role, involved in the catabolism of branched amino acids such as leucine. The sequence is that of Hydroxymethylglutaryl-CoA lyase, mitochondrial (HMGCL) from Arabidopsis thaliana (Mouse-ear cress).